The following is a 466-amino-acid chain: Asparagine--tRNA ligase (466 aa).

This sequence belongs to the class-II aminoacyl-tRNA synthetase family. Homodimer.

The protein localises to the cytoplasm. It carries out the reaction tRNA(Asn) + L-asparagine + ATP = L-asparaginyl-tRNA(Asn) + AMP + diphosphate + H(+). The polypeptide is Asparagine--tRNA ligase (Shewanella amazonensis (strain ATCC BAA-1098 / SB2B)).